Here is a 321-residue protein sequence, read N- to C-terminus: Ferredoxin--NADP reductase (321 aa).

Asp-34, Gln-42, Tyr-47, Val-87, Phe-119, Asp-278, and Thr-319 together coordinate FAD.

The protein belongs to the ferredoxin--NADP reductase type 2 family. As to quaternary structure, homodimer. The cofactor is FAD.

The catalysed reaction is 2 reduced [2Fe-2S]-[ferredoxin] + NADP(+) + H(+) = 2 oxidized [2Fe-2S]-[ferredoxin] + NADPH. The protein is Ferredoxin--NADP reductase of Streptococcus pneumoniae serotype 4 (strain ATCC BAA-334 / TIGR4).